The primary structure comprises 425 residues: Tol-Pal system protein TolB (425 aa).

The N-terminal stretch at 1 to 25 (MTRKHILSFALMTALGMTVTSTAFA) is a signal peptide.

This sequence belongs to the TolB family. As to quaternary structure, the Tol-Pal system is composed of five core proteins: the inner membrane proteins TolA, TolQ and TolR, the periplasmic protein TolB and the outer membrane protein Pal. They form a network linking the inner and outer membranes and the peptidoglycan layer.

The protein localises to the periplasm. Part of the Tol-Pal system, which plays a role in outer membrane invagination during cell division and is important for maintaining outer membrane integrity. The polypeptide is Tol-Pal system protein TolB (Acinetobacter baylyi (strain ATCC 33305 / BD413 / ADP1)).